Consider the following 2210-residue polypeptide: Mediator of RNA polymerase II transcription subunit 13-like (2210 aa).

Over residues Ser-391–Thr-400 the composition is skewed to polar residues. Disordered regions lie at residues Ser-391–Phe-414, Ala-435–His-489, and Val-519–Leu-582. A compositionally biased stretch (low complexity) spans Ser-445 to Ser-458. Basic and acidic residues predominate over residues Lys-468–Gln-480. Positions Ser-533–Pro-544 are enriched in polar residues. The span at Pro-551 to Ser-560 shows a compositional bias: pro residues. A phosphoserine mark is found at Ser-553 and Ser-560. An LXXLL motif 1 motif is present at residues Leu-669–Leu-673. Over residues Gly-736 to Gly-752 the composition is skewed to basic and acidic residues. A disordered region spans residues Gly-736–Asn-770. Phosphoserine is present on residues Ser-817, Ser-826, and Ser-923. Residues Pro-1016 to Glu-1096 form a disordered region. The span at Asn-1025–Gly-1036 shows a compositional bias: low complexity. The segment covering Thr-1077 to Leu-1092 has biased composition (polar residues). The short motif at Leu-1225–Leu-1229 is the LXXLL motif 2 element. The interval Leu-1380–Leu-1401 is leucine-zipper. 2 disordered regions span residues Gln-1530–Arg-1656 and Gly-2045–Arg-2080. Positions Thr-1531–Ser-1608 are enriched in low complexity. The segment covering Asn-1615–Asn-1629 has biased composition (polar residues). The segment covering Asp-1637–Gln-1650 has biased composition (low complexity). Ser-2083 is modified (phosphoserine).

Belongs to the Mediator complex subunit 13 family. In terms of assembly, component of the Mediator complex, which is composed of MED1, MED4, MED6, MED7, MED8, MED9, MED10, MED11, MED12, MED13, MED13L, MED14, MED15, MED16, MED17, MED18, MED19, MED20, MED21, MED22, MED23, MED24, MED25, MED26, MED27, MED29, MED30, MED31, CCNC, CDK8 and CDC2L6/CDK11. The MED12, MED13, CCNC and CDK8 subunits form a distinct module termed the CDK8 module. Mediator containing the CDK8 module is less active than Mediator lacking this module in supporting transcriptional activation. Individual preparations of the Mediator complex lacking one or more distinct subunits have been variously termed ARC, CRSP, DRIP, PC2, SMCC and TRAP. In terms of tissue distribution, highly expressed in brain (cerebellum), heart (aorta), skeletal muscle, kidney, placenta and peripheral blood leukocytes. Highly expressed in fetal brain.

It localises to the nucleus. In terms of biological role, component of the Mediator complex, a coactivator involved in the regulated transcription of nearly all RNA polymerase II-dependent genes. Mediator functions as a bridge to convey information from gene-specific regulatory proteins to the basal RNA polymerase II transcription machinery. Mediator is recruited to promoters by direct interactions with regulatory proteins and serves as a scaffold for the assembly of a functional preinitiation complex with RNA polymerase II and the general transcription factors. This subunit may specifically regulate transcription of targets of the Wnt signaling pathway and SHH signaling pathway. The sequence is that of Mediator of RNA polymerase II transcription subunit 13-like (MED13L) from Homo sapiens (Human).